Reading from the N-terminus, the 249-residue chain is MVAFDANEALTPCREGRGIGAILFDRERLRQAEADLFSPQHWGSKARPVGEGGRGSAWFIDAPFGASVLRHYLRGGLAAKISHDQYLWRGADRTRSFAEFRLMRALREKKLPVPRPLAAFYMREGLRYRAAILMERIEGVRSLADRALVAGRGAPWEETGRLIARFHRAGLDHADLNAHNILFDGNGHGWLIDFDRGVIRIPATAWRERNLKRLLRSLIKLRGERSVEDVQKDYVRLRRAYDMAWNRGT.

Residue Asp175 is part of the active site.

This sequence belongs to the protein kinase superfamily. KdkA/RfaP family.

The protein localises to the cell inner membrane. The enzyme catalyses an alpha-Kdo-(2-&gt;6)-lipid IVA + ATP = a 4-O-phospho-alpha-Kdo-(2-&gt;6)-lipid IVA + ADP + H(+). Its pathway is bacterial outer membrane biogenesis; LPS core biosynthesis. Functionally, catalyzes the ATP-dependent phosphorylation of the 3-deoxy-D-manno-octulosonic acid (Kdo) residue in Kdo-lipid IV(A) at the 4-OH position. In Stenotrophomonas maltophilia (strain R551-3), this protein is 3-deoxy-D-manno-octulosonic acid kinase.